We begin with the raw amino-acid sequence, 66 residues long: Alpha-conotoxin RegIIA (66 aa).

A signal peptide spans 1-21; it reads MGMRMMFTVFLLVVLTTTVVS. Residues 22-49 constitute a propeptide that is removed on maturation; sequence STSVRASDGRNAAADNRASDLIAQIVRR. Intrachain disulfides connect cysteine 51/cysteine 57 and cysteine 52/cysteine 65. The ser-Xaa-Pro motif, crucial for potent interaction with nAChR stretch occupies residues 53–55; the sequence is SHP. At cysteine 65 the chain carries Cysteine amide.

Belongs to the conotoxin A superfamily. Expressed by the venom duct.

Its subcellular location is the secreted. Its function is as follows. Alpha-conotoxins act on postsynaptic membranes, they bind to the nicotinic acetylcholine receptors (nAChR) and thus inhibit them. This toxin potently inhibits alpha-3 containing subunit nAChR. It inhibits alpha-3-beta-2/CHRNA3-CHRNB2 (IC(50)=10.7-33 nM (rat)/132.4-704.1 nM (human)) and alpha-3-beta-4/CHRNA3-CHRNB4 (IC(50)=47.3-97 nM (rat)/52.1 nM (human)). It also inhibits alpha-7/CHRNA7 nAChR with IC(50)=103-210 nM (human)/41-61.2 nM (rat) nAChRs. It is more potent on alpha-3-beta-2 receptors in human than in rat, due to a variation (Pro vs Gln) in alpha-3 subunit in these orthologs. Conversely, does not show species-specific differences in sensitivity at the alpha-3-beta-4 receptor. This chain is Alpha-conotoxin RegIIA, found in Conus regius (Crown cone).